The chain runs to 403 residues: Glucose/galactose-binding lipoprotein (403 aa).

A signal peptide spans 1 to 25 (MKENSCTACSRRLALFVGAAVLVVG). C26 carries N-palmitoyl cysteine lipidation. Residue C26 is the site of S-diacylglycerol cysteine attachment.

Belongs to the bacterial solute-binding protein 2 family.

It is found in the cell membrane. Its function is as follows. May be involved in the transport of sugars. May have a role in chemotaxis. The polypeptide is Glucose/galactose-binding lipoprotein (mglB) (Treponema pallidum (strain Nichols)).